The sequence spans 313 residues: MAPALTLEKPVETNAFPRKAASVETSENYEGNYKFAPIEEAQVSRAMIKRYFNTMYDRAISDVVIVGAGSAGLSCAYSLATQRPDLKITIVEAGVAPGGGAWLGGQLMTPMVIRKPADAFLRELGVPYEDEGNFVVVKHAALFTSTLLSKVLAKPNVVMMNATAVEDLIVHEDFAGQQRVAGVVTNWTLVALNHDTQSCMDPNTITAPVIVSATGHDGPMGAFSAKRLVSTGLLKELGNMRGLDMNRAEPAIVNGTREVVPGLILTGMELSEHDGSNRMGPTFGAMIGSGHKAAHEAIRILDRHKVVNGKVVA.

Residues Ala71, 92-93, Gly100, and Val165 each bind substrate; that span reads EA. Cys199 bears the 2,3-didehydroalanine (Cys) mark. Substrate is bound by residues Asp201, His216, Met268, and 278-280; that span reads RMG.

It belongs to the THI4 family. Homooctamer. The cofactor is Fe cation. During the catalytic reaction, a sulfide is transferred from Cys-199 to a reaction intermediate, generating a dehydroalanine residue.

It is found in the cytoplasm. It localises to the nucleus. The enzyme catalyses [ADP-thiazole synthase]-L-cysteine + glycine + NAD(+) = [ADP-thiazole synthase]-dehydroalanine + ADP-5-ethyl-4-methylthiazole-2-carboxylate + nicotinamide + 3 H2O + 2 H(+). In terms of biological role, involved in biosynthesis of the thiamine precursor thiazole. Catalyzes the conversion of NAD and glycine to adenosine diphosphate 5-(2-hydroxyethyl)-4-methylthiazole-2-carboxylic acid (ADT), an adenylated thiazole intermediate. The reaction includes an iron-dependent sulfide transfer from a conserved cysteine residue of the protein to a thiazole intermediate. The enzyme can only undergo a single turnover, which suggests it is a suicide enzyme. May have additional roles in adaptation to various stress conditions and in DNA damage tolerance. This Coprinopsis cinerea (strain Okayama-7 / 130 / ATCC MYA-4618 / FGSC 9003) (Inky cap fungus) protein is Thiamine thiazole synthase.